The primary structure comprises 647 residues: LIM domain kinase 1 (647 aa).

2 consecutive LIM zinc-binding domains span residues 25–75 (CASC…CKKD) and 84–137 (CHGC…CGQC). Positions 165-258 (LVSIPASAHG…LLQLTLEHDP (94 aa)) constitute a PDZ domain. Position 210 is a phosphoserine (Ser-210). Residue Thr-229 is modified to Phosphothreonine. The disordered stretch occupies residues 256–319 (HDPHDSLGHG…SPASQRKDLG (64 aa)). Over residues 266–277 (PVSDPSPLSSPV) the composition is skewed to low complexity. Composition is skewed to polar residues over residues 278–289 (HTPSGQAASSAR) and 298–313 (SIDT…SPAS). Residues Ser-298, Ser-302, Ser-307, and Ser-310 each carry the phosphoserine modification. At Ser-323 the chain carries Phosphoserine; by MAPKAPK2. At Ser-337 the chain carries Phosphoserine. Residues 339–604 (LIHGEVLGKG…PSFVKLEQWL (266 aa)) enclose the Protein kinase domain. ATP contacts are provided by residues 345-353 (LGKGCFGQA) and Lys-368. Asp-460 is an active-site residue. Phosphothreonine; by ROCK1 is present on Thr-508.

It belongs to the protein kinase superfamily. TKL Ser/Thr protein kinase family. In terms of assembly, self-associates to form homodimers. Interacts with HSP90AA1; this interaction promotes LIMK1 dimerization and subsequent transphosphorylation. Interacts with CDKN1C. Interacts (via LIM domain) with the cytoplasmic domain of NRG1. Interacts with NISCH. Interacts with SSH1. Interacts with RLIM and RNF6. Interacts (via LIM zinc-binding domains) with FAM89B/LRAP25 (via LRR repeat). Forms a tripartite complex with CDC42BPA, CDC42BPB and FAM89B/LRAP25. Post-translationally, autophosphorylated. Phosphorylated on Thr-508 by ROCK1 and PAK1, resulting in activation. Phosphorylated by PAK4 which increases the ability of LIMK1 to phosphorylate cofilin. Phosphorylated at Ser-323 by MAPKAPK2 during activation of VEGFA-induced signaling, which results in activation of LIMK1 and promotion of actin reorganization, cell migration, and tubule formation of endothelial cells. Dephosphorylated and inactivated by SSH1. Phosphorylated by CDC42BP. In terms of processing, ubiquitinated. 'Lys-48'-linked polyubiquitination by RNF6 leads to proteasomal degradation through the 26S proteasome, modulating LIMK1 levels in the growth cone and its effect on axonal outgrowth. Also polyubiquitinated by RLIM. Highest expression in the nervous system, particularly in the spinal cord and the cranial nerve and dorsal root ganglia.

It is found in the cytoplasm. Its subcellular location is the nucleus. The protein localises to the cytoskeleton. It localises to the cell projection. The protein resides in the lamellipodium. The catalysed reaction is L-seryl-[protein] + ATP = O-phospho-L-seryl-[protein] + ADP + H(+). It carries out the reaction L-threonyl-[protein] + ATP = O-phospho-L-threonyl-[protein] + ADP + H(+). Its function is as follows. Serine/threonine-protein kinase that plays an essential role in the regulation of actin filament dynamics. Acts downstream of several Rho family GTPase signal transduction pathways. Activated by upstream kinases including ROCK1, PAK1 and PAK4, which phosphorylate LIMK1 on a threonine residue located in its activation loop. LIMK1 subsequently phosphorylates and inactivates the actin binding/depolymerizing factors cofilin-1/CFL1, cofilin-2/CFL2 and destrin/DSTN, thereby preventing the cleavage of filamentous actin (F-actin), and stabilizing the actin cytoskeleton. In this way LIMK1 regulates several actin-dependent biological processes including cell motility, cell cycle progression, and differentiation. Phosphorylates TPPP on serine residues, thereby promoting microtubule disassembly. Stimulates axonal outgrowth and may be involved in brain development. The sequence is that of LIM domain kinase 1 (Limk1) from Mus musculus (Mouse).